Here is a 710-residue protein sequence, read N- to C-terminus: DNA ligase (710 aa).

Residues 1 to 26 (MPEDAIGQQVPPEQEAAGAEPTSAAR) form a disordered region. NAD(+)-binding positions include 53-57 (DAEFD), 102-103 (SL), and Glu-132. The active-site N6-AMP-lysine intermediate is Lys-134. Residues Arg-155, Glu-196, Lys-312, and Lys-336 each coordinate NAD(+). Cys-430, Cys-433, Cys-449, and Cys-455 together coordinate Zn(2+). Positions 619–708 (EGPRPLEGMT…PDAAREVARV (90 aa)) constitute a BRCT domain.

It belongs to the NAD-dependent DNA ligase family. LigA subfamily. Mg(2+) serves as cofactor. The cofactor is Mn(2+).

It carries out the reaction NAD(+) + (deoxyribonucleotide)n-3'-hydroxyl + 5'-phospho-(deoxyribonucleotide)m = (deoxyribonucleotide)n+m + AMP + beta-nicotinamide D-nucleotide.. In terms of biological role, DNA ligase that catalyzes the formation of phosphodiester linkages between 5'-phosphoryl and 3'-hydroxyl groups in double-stranded DNA using NAD as a coenzyme and as the energy source for the reaction. It is essential for DNA replication and repair of damaged DNA. In Salinispora arenicola (strain CNS-205), this protein is DNA ligase.